The chain runs to 139 residues: MVQRLTLRRRLSYNTKSNKRRVVRTPGGRLVYLYVKKQRTVPKCGQCKEKLSGIKPSRPSERPRMCRRLKTVTRTFGGVLCHRCLRERIIRAFLIDEQKVVKVLKAQQLGKPVSKPPKIAKAPAAAAAAKPAKTATKSK.

The segment at 113-139 is disordered; that stretch reads VSKPPKIAKAPAAAAAAKPAKTATKSK.

It belongs to the eukaryotic ribosomal protein eL34 family.

This is Large ribosomal subunit protein eL34 (RpL34) from Ochlerotatus triseriatus (Eastern treehole mosquito).